Reading from the N-terminus, the 480-residue chain is MVRRRAQEVSAVTDQPACPPAMDLAPASGSRGLHVITWGCQMNVYDSARMTDVLRPLGYHPVDTPDTADMVILNTCHIRDRAAEKVFSELGRLRLVKEARATEGQQTVLAVAGCVAQAEGKEILARAPFVDIVLGPQTYHRLPEMVARAARAAGAVIDTDFPAEQKFDFLPDAQAPQSPGGITSFLTIQEGCDKFCSFCVVPYTRGAEASRPVASVLREARRMVECGAREITLLGQNVNAYHGEGPDGRVWGLARLAEALAAIPGLARIRYTTSHPRDMDADLIAAHRDLPALMPFLHLPVQSGSDRILDAMNRGHTAADYRDLVLRLRDARPDIALSSDFIVGHPGETDADFEATLQLIRDVGFAQAFSFKYSPRPGTPAAGAPLQVAEDVKDARLQALQALLRTQQDAFNDGTVGHVVPVLFTGHGRKAGQLSGRSPYLQPVHVEGPDSLIGQIANVEIRERYTNSLSGTLVQERAFA.

The MTTase N-terminal domain occupies 31 to 151; that stretch reads RGLHVITWGC…LPEMVARAAR (121 aa). Cysteine 40, cysteine 76, cysteine 114, cysteine 192, cysteine 196, and cysteine 199 together coordinate [4Fe-4S] cluster. Residues 178 to 410 form the Radical SAM core domain; sequence SPGGITSFLT…QALLRTQQDA (233 aa). In terms of domain architecture, TRAM spans 413–475; the sequence is DGTVGHVVPV…TNSLSGTLVQ (63 aa).

It belongs to the methylthiotransferase family. MiaB subfamily. Monomer. The cofactor is [4Fe-4S] cluster.

The protein resides in the cytoplasm. It catalyses the reaction N(6)-dimethylallyladenosine(37) in tRNA + (sulfur carrier)-SH + AH2 + 2 S-adenosyl-L-methionine = 2-methylsulfanyl-N(6)-dimethylallyladenosine(37) in tRNA + (sulfur carrier)-H + 5'-deoxyadenosine + L-methionine + A + S-adenosyl-L-homocysteine + 2 H(+). Catalyzes the methylthiolation of N6-(dimethylallyl)adenosine (i(6)A), leading to the formation of 2-methylthio-N6-(dimethylallyl)adenosine (ms(2)i(6)A) at position 37 in tRNAs that read codons beginning with uridine. This Gluconacetobacter diazotrophicus (strain ATCC 49037 / DSM 5601 / CCUG 37298 / CIP 103539 / LMG 7603 / PAl5) protein is tRNA-2-methylthio-N(6)-dimethylallyladenosine synthase.